Here is a 287-residue protein sequence, read N- to C-terminus: Protoheme IX farnesyltransferase (287 aa).

A run of 7 helical transmembrane segments spans residues 19-39 (LMVA…VTIT), 100-120 (MVLC…IVAV), 134-154 (FALL…WLAV), 162-182 (MLVV…WLHA), 212-232 (VWFH…LLEW), 233-253 (VGMR…AMLA), and 267-287 (VLCA…VSLF).

Belongs to the UbiA prenyltransferase family. Protoheme IX farnesyltransferase subfamily.

It localises to the cell inner membrane. It catalyses the reaction heme b + (2E,6E)-farnesyl diphosphate + H2O = Fe(II)-heme o + diphosphate. It functions in the pathway porphyrin-containing compound metabolism; heme O biosynthesis; heme O from protoheme: step 1/1. Converts heme B (protoheme IX) to heme O by substitution of the vinyl group on carbon 2 of heme B porphyrin ring with a hydroxyethyl farnesyl side group. This Nitratidesulfovibrio vulgaris (strain ATCC 29579 / DSM 644 / CCUG 34227 / NCIMB 8303 / VKM B-1760 / Hildenborough) (Desulfovibrio vulgaris) protein is Protoheme IX farnesyltransferase.